We begin with the raw amino-acid sequence, 459 residues long: Bifunctional protein GlmU (459 aa).

A pyrophosphorylase region spans residues 1–229 (MTNYAIILAA…FDESLGVNDR (229 aa)). Residues 8–11 (LAAG), Lys-22, Gln-72, and 77–78 (GT) contribute to the UDP-N-acetyl-alpha-D-glucosamine site. Asp-102 contacts Mg(2+). UDP-N-acetyl-alpha-D-glucosamine-binding residues include Gly-139, Glu-154, Asn-169, and Asn-227. Residue Asn-227 coordinates Mg(2+). Residues 230 to 250 (VALATAESVMRRRINQQHMVN) are linker. The tract at residues 251–459 (GVSFVNPHAT…KRLPHHPQNK (209 aa)) is N-acetyltransferase. UDP-N-acetyl-alpha-D-glucosamine contacts are provided by Arg-332 and Lys-350. His-362 acts as the Proton acceptor in catalysis. UDP-N-acetyl-alpha-D-glucosamine is bound by residues Tyr-365 and Asn-376. Acetyl-CoA contacts are provided by residues Ala-379, 385-386 (NY), Ser-404, Ala-422, and Arg-439.

The protein in the N-terminal section; belongs to the N-acetylglucosamine-1-phosphate uridyltransferase family. It in the C-terminal section; belongs to the transferase hexapeptide repeat family. In terms of assembly, homotrimer. Requires Mg(2+) as cofactor.

The protein localises to the cytoplasm. The enzyme catalyses alpha-D-glucosamine 1-phosphate + acetyl-CoA = N-acetyl-alpha-D-glucosamine 1-phosphate + CoA + H(+). It catalyses the reaction N-acetyl-alpha-D-glucosamine 1-phosphate + UTP + H(+) = UDP-N-acetyl-alpha-D-glucosamine + diphosphate. Its pathway is nucleotide-sugar biosynthesis; UDP-N-acetyl-alpha-D-glucosamine biosynthesis; N-acetyl-alpha-D-glucosamine 1-phosphate from alpha-D-glucosamine 6-phosphate (route II): step 2/2. It participates in nucleotide-sugar biosynthesis; UDP-N-acetyl-alpha-D-glucosamine biosynthesis; UDP-N-acetyl-alpha-D-glucosamine from N-acetyl-alpha-D-glucosamine 1-phosphate: step 1/1. The protein operates within bacterial outer membrane biogenesis; LPS lipid A biosynthesis. Catalyzes the last two sequential reactions in the de novo biosynthetic pathway for UDP-N-acetylglucosamine (UDP-GlcNAc). The C-terminal domain catalyzes the transfer of acetyl group from acetyl coenzyme A to glucosamine-1-phosphate (GlcN-1-P) to produce N-acetylglucosamine-1-phosphate (GlcNAc-1-P), which is converted into UDP-GlcNAc by the transfer of uridine 5-monophosphate (from uridine 5-triphosphate), a reaction catalyzed by the N-terminal domain. The protein is Bifunctional protein GlmU of Streptococcus sanguinis (strain SK36).